The sequence spans 339 residues: MDLQENIPLQSLNTFGIAATARYYSLVKSQAMLKQLLNNSSLHSLLKLTIGGGSNILFVKDFDGWVIHMDIKGIEKLGEDNNHIWLHVGAGVNWHSLVLYCIEKGYAGIENLSLIPGTVGAAPIQNIGAYGVEFSEVFESLEALEISTGLIKKFNKEACAFSYRDSIFKSSLKGQYIILQVTLRLNKQPTFQTNYGAIQEVLASMKPRTLSIKAISDAVIYIRQQKLPNPAYIGNAGSFFKNPIIDQAKATLLRNKYPNIPVHILANGYAKLPAAWLIEQSGWKGYRHDAVGVHLHQPLVIVNYGGATGKAVYKLAQAIQASVAENFSVMLEPEVNIIQ.

In terms of domain architecture, FAD-binding PCMH-type spans 16–188; the sequence is GIAATARYYS…LQVTLRLNKQ (173 aa). The active site involves R164. S238 acts as the Proton donor in catalysis. E334 is an active-site residue.

Belongs to the MurB family. FAD is required as a cofactor.

It localises to the cytoplasm. The catalysed reaction is UDP-N-acetyl-alpha-D-muramate + NADP(+) = UDP-N-acetyl-3-O-(1-carboxyvinyl)-alpha-D-glucosamine + NADPH + H(+). Its pathway is cell wall biogenesis; peptidoglycan biosynthesis. In terms of biological role, cell wall formation. In Amoebophilus asiaticus (strain 5a2), this protein is UDP-N-acetylenolpyruvoylglucosamine reductase.